The sequence spans 215 residues: Probable transaldolase (215 aa).

Lysine 84 serves as the catalytic Schiff-base intermediate with substrate.

Belongs to the transaldolase family. Type 3B subfamily.

The protein localises to the cytoplasm. The catalysed reaction is D-sedoheptulose 7-phosphate + D-glyceraldehyde 3-phosphate = D-erythrose 4-phosphate + beta-D-fructose 6-phosphate. Its pathway is carbohydrate degradation; pentose phosphate pathway; D-glyceraldehyde 3-phosphate and beta-D-fructose 6-phosphate from D-ribose 5-phosphate and D-xylulose 5-phosphate (non-oxidative stage): step 2/3. Transaldolase is important for the balance of metabolites in the pentose-phosphate pathway. The chain is Probable transaldolase from Exiguobacterium sibiricum (strain DSM 17290 / CCUG 55495 / CIP 109462 / JCM 13490 / 255-15).